The sequence spans 216 residues: Regulator of G-protein signaling 19 (216 aa).

Positions 1–19 (MPTPHEAEKQHTGPEEADR) are enriched in basic and acidic residues. The interval 1–30 (MPTPHEAEKQHTGPEEADRPPSMSSHDAAP) is disordered. Ser-24 carries the post-translational modification Phosphoserine; by CK2. An RGS domain is found at 90-206 (SFDKLMHSPT…LTSPTYRSLL (117 aa)). Residue Ser-97 is modified to Phosphoserine. At Ser-151 the chain carries Phosphoserine; by MAPK1 and MAPK3. The interval 207 to 216 (LQGAPQSSEA) is interaction with GIPC.

As to quaternary structure, interacts with GIPC PDZ domain. Interacts with GNAO1. Post-translationally, fatty acylated. Heavily palmitoylated in the cysteine string motif. Phosphorylated, mainly on serine residues.

It localises to the membrane. Inhibits signal transduction by increasing the GTPase activity of G protein alpha subunits thereby driving them into their inactive GDP-bound form. Binds to G-alpha subfamily 1 members, predominantly to G(i)-alpha-3. Activity on G(z)-alpha is inhibited by phosphorylation and palmitoylation of the G-protein. The polypeptide is Regulator of G-protein signaling 19 (Rgs19) (Rattus norvegicus (Rat)).